Here is a 1053-residue protein sequence, read N- to C-terminus: MAFLKLRDQPSLVQAIFNGDPDEVRALIFKKEDVNFQDNEKRTPLHAAAYLGDAEIIELLILSGARVNAKDSKWLTPLHRAVASCSEEAVQILLKHSADVNARDKNWQTPLHIAAANKAVKCAESLVPLLSNVNVSDRAGRTALHHAAFSGHGEMVKLLLSRGANINAFDKKDRRAIHWAAYMGHIEVVKLLVSHGAEVTCKDKKSYTPLHAAASSGMISVVKYLLDLGVDMNEPNAYGNTPLHVACYNGQDVVVNELIDCGANVNQKNEKGFTPLHFAAASTHGALCLELLVGNGADVNMKSKDGKTPLHMTALHGRFSRSQTIIQSGAVIDCEDKNGNTPLHIAARYGHELLINTLITSGADTAKRGIHGMFPLHLAALSGFSDCCRKLLSSGFDIDTPDDFGRTCLHAAAAGGNLECLNLLLNTGADFNKKDKFGRSPLHYAAANCNYQCLFALVGSGASVNDLDERGCTPLHYAATSDTDGKCLEYLLRNDANPGIRDKQGYNAVHYSAAYGHRLCLQLIASETPLDVLMETSGTDMLSDSDNRATISPLHLAAYHGHHQALEVLVQSLLDLDVRNSSGRTPLDLAAFKGHVECVDVLINQGASILVKDYVLKRTPIHAAATNGHSECLRLLIGNAEPQNAVDIQDGNGQTPLMLSVLNGHTDCVYSLLNKGANVDAKDKWGRTALHRGAVTGHEECVDALLQHGAKCLLRDSRGRTPIHLSAACGHIGVLGALLQSATSVDANPAVVDNHGYTALHWACYNGHETCVELLLEQDVFQKIDGNAFSPLHCAVINDNEGAAEMLIDSLGASIVNATDSKGRTPLHAAAFTDHVECLQLLLSQNAQVNSADSTGKTPLMMAAENGQTNTVEMLVSSASADLTLQDKSKNTALHLACGKGHETSALLILEKITDRNLINATNAALQTPLHVAARNGLTMVVQELLGKGASVLAVDENGYTPALACAPNKDVADCLALILATMMPVSSSSPLTSLTFNAINRYTNTSKTVSFEALPIMRNEASSYCSFNNIGGEQEYLYTDVDELNDSDSETY.

ANK repeat units follow at residues 40-69 (EKRT…RVNA), 73-102 (KWLT…DVNA), 106-135 (NWQT…NVNV), 139-168 (AGRT…NINA), 172-201 (KDRR…EVTC), 205-234 (KSYT…DMNE), 238-267 (YGNT…NVNQ), 271-301 (KGFT…DVNM), 305-334 (DGKT…VIDC), 338-367 (NGNT…DTAK), 371-400 (HGMF…DIDT), 404-433 (FGRT…DFNK), 437-466 (FGRS…SVND), 470-500 (RGCT…NPGI), 504-534 (QGYN…DVLM), 549-578 (ATIS…DLDV), 582-611 (SGRT…SILV), 616-645 (LKRT…PQNA), 652-681 (NGQT…NVDA), 685-714 (WGRT…KCLL), 718-747 (RGRT…SVDA), 755-786 (HGYT…KIDG), 788-817 (AFSP…SIVN), 822-851 (KGRT…QVNS), 855-885 (TGKT…DLTL), 889-918 (SKNT…DRNL), and 925-954 (ALQT…SVLA). 2 positions are modified to phosphoserine: serine 1007 and serine 1011.

As to quaternary structure, protein phosphatase 6 (PP6) holoenzyme is proposed to be a heterotrimeric complex formed by the catalytic subunit, a SAPS domain-containing subunit (PP6R) and an ankyrin repeat-domain containing regulatory subunit (ARS). Interacts with PPP1C and HNRPK. Interacts with PPP6C, PPP6R1 and PPP6R3. In terms of processing, ubiquitinated by the ECS(RAB40C) complex leading to its degradation and decreased PP6 activity. Widely expressed (at protein level).

The protein resides in the nucleus. It localises to the nucleoplasm. It is found in the cytoplasm. The protein localises to the cytosol. Its subcellular location is the cell projection. The protein resides in the lamellipodium. Functionally, putative regulatory subunit of protein phosphatase 6 (PP6) that may be involved in the recognition of phosphoprotein substrates. Involved in the PP6-mediated dephosphorylation of NFKBIE opposing its degradation in response to TNF-alpha. Selectively inhibits the phosphatase activity of PPP1C. Targets PPP1C to modulate HNRPK phosphorylation. Involved in the PP6-mediated dephosphorylation of MOB1 and induced focal adhesion assembly during cell migration. The protein is Serine/threonine-protein phosphatase 6 regulatory ankyrin repeat subunit A (Ankrd28) of Mus musculus (Mouse).